The sequence spans 543 residues: EH domain-containing protein 2 (543 aa).

Phosphoserine occurs at positions 3 and 44. In terms of domain architecture, Dynamin-type G spans Phe55–Pro286. The tract at residues Gly65–Thr72 is G1 motif. Gly65 to Thr72 is an ATP binding site. The interval Glu91–Pro92 is G2 motif. A G3 motif region spans residues Asp153–Gly156. Residues Asn219–Asp222 form a G4 motif region. ATP is bound at residue Lys220. Val243 is a region of interest (G5 motif). Trp258 provides a ligand contact to ATP. The segment at Thr320–Ala340 is mediates membrane-binding. Phosphoserine is present on residues Ser438, Ser468, Ser470, Ser484, and Ser493. Residues Asp449–Arg537 form the EH domain. The region spanning Leu481–Lys516 is the EF-hand domain. Ca(2+) is bound by residues Asp494, Asp496, Asp498, Met500, and Glu505. The interval Gly521–Glu543 is disordered. Residues Ser534–Glu543 are compositionally biased toward basic residues.

Belongs to the TRAFAC class dynamin-like GTPase superfamily. Dynamin/Fzo/YdjA family. EHD subfamily. In terms of assembly, homodimer and homooligomer. Interacts with EHD1. May also interact with EHD3 and EHD4. Interacts with MYOF. Interacts with EHBP1. Interacts with FER1L5 (via second C2 domain). Interacts with CAV1 in a cholesterol-dependent manner. Interacts (via EH domain) with PACSIN2 (via NPF motifs); this interaction probably stabilizes the caveolae. In terms of tissue distribution, detected in lung and adipocytes. Detected at lower levels in heart and skeletal muscle.

Its subcellular location is the cell membrane. The protein resides in the membrane. It is found in the caveola. It localises to the endosome membrane. The protein localises to the cytoplasm. Its subcellular location is the cytosol. The very low intrinsic ATPase activity is increased upon interaction with liposomes. In terms of biological role, ATP- and membrane-binding protein that controls membrane reorganization/tubulation upon ATP hydrolysis. Plays a role in membrane trafficking between the plasma membrane and endosomes. Important for the internalization of GLUT4. Required for fusion of myoblasts to skeletal muscle myotubes. Required for normal translocation of FER1L5 to the plasma membrane. Regulates the equilibrium between cell surface-associated and cell surface-dissociated caveolae by constraining caveolae at the cell membrane. This Mus musculus (Mouse) protein is EH domain-containing protein 2.